The primary structure comprises 213 residues: Sclerostin (213 aa).

Positions methionine 1–alanine 28 are cleaved as a signal peptide. The N-linked (GlcNAc...) asparagine glycan is linked to asparagine 53. Disulfide bonds link cysteine 80-cysteine 134, cysteine 94-cysteine 148, cysteine 105-cysteine 165, and cysteine 109-cysteine 167. In terms of domain architecture, CTCK spans glutamate 82 to arginine 172. Asparagine 175 carries N-linked (GlcNAc...) asparagine glycosylation. The tract at residues glutamate 178–tyrosine 213 is disordered. Over residues glutamine 190–glycine 201 the composition is skewed to basic residues.

This sequence belongs to the sclerostin family. In terms of assembly, interacts with LRP4 (via the extracellular domain); the interaction facilitates the inhibition of Wnt signaling. Interacts with LRP5 (via the first two YWTD-EGF repeat domains); the interaction inhibits Wnt-mediated signaling. Interacts with LRP6.

The protein localises to the secreted. Functionally, negative regulator of bone growth that acts through inhibition of Wnt signaling and bone formation. The sequence is that of Sclerostin from Rattus norvegicus (Rat).